The primary structure comprises 366 residues: Di-N-acetylchitobiase (366 aa).

A signal peptide spans 1 to 22 (MALCGLPEFTLLLLPLLARLSA). Residues 23-366 (GDCPCSEAAL…EMWGALKPRL (344 aa)) form the GH18 domain. Glu-127 functions as the Proton donor in the catalytic mechanism. Asn-131, Asn-177, Asn-212, Asn-246, and Asn-283 each carry an N-linked (GlcNAc...) asparagine glycan.

The protein belongs to the glycosyl hydrolase 18 family.

Its subcellular location is the lysosome. In terms of biological role, involved in the degradation of asparagine-linked glycoproteins. Hydrolyze of N-acetyl-beta-D-glucosamine (1-4)N-acetylglucosamine chitobiose core from the reducing end of the bond, it requires prior cleavage by glycosylasparaginase. The sequence is that of Di-N-acetylchitobiase (Ctbs) from Mus musculus (Mouse).